Consider the following 111-residue polypeptide: Cytochrome c 2.1 (111 aa).

S2 is modified (N-acetylserine). Heme c is bound by residues C20, C23, H24, and M85.

Belongs to the cytochrome c family. In terms of processing, binds 1 heme c group covalently per subunit.

Its subcellular location is the mitochondrion intermembrane space. In terms of biological role, electron carrier protein. The oxidized form of the cytochrome c heme group can accept an electron from the heme group of the cytochrome c1 subunit of cytochrome reductase. Cytochrome c then transfers this electron to the cytochrome oxidase complex, the final protein carrier in the mitochondrial electron-transport chain. In Caenorhabditis elegans, this protein is Cytochrome c 2.1 (cyc-2.1).